The chain runs to 233 residues: uncharacterized protein (233 aa).

Transmembrane regions (helical) follow at residues Val-7–Tyr-27, Tyr-36–Pro-56, Met-62–Ala-82, Leu-119–Met-139, Pro-159–Val-179, and Ile-188–Ile-208.

It localises to the cell membrane. This is an uncharacterized protein from Methanocaldococcus jannaschii (strain ATCC 43067 / DSM 2661 / JAL-1 / JCM 10045 / NBRC 100440) (Methanococcus jannaschii).